The sequence spans 336 residues: MLEYILWTALYVLLIVIPLILVVAYYTYAERKVIGYMQDRIGPNRVGSFGLLQPIFDALKLFLKEIIVPTNSNRYLFFIAPILAFAPAYAAWAVIPFSKGVVLSDMNLGLLYILAMTSFSVYGIVIAGWASNSKYSLFGALRAGAQVVSYELAMGFAIVGVVIAAGSMGITGIIESQAGGLWHWYFIPLFPLFVVYFIAGIAETNRAPFDVVEGESEIIAGHHIEYTGSRFALFFLAEYANMILISILTSIMFLGGWCSPFEATPLEAVFNFVPGVVWLFAKTGIFMFMFLWVRATFPRYRYDQIMRLGWKIFIPLTFVWVVVVACMVRFGVGPWW.

8 helical membrane-spanning segments follow: residues 4 to 24 (YILW…LVVA), 75 to 95 (YLFF…WAVI), 108 to 128 (LGLL…VIAG), 154 to 174 (MGFA…TGII), 181 to 201 (LWHW…IAGI), 233 to 253 (LFFL…SIMF), 272 to 292 (FVPG…MFLW), and 308 to 328 (LGWK…ACMV).

The protein belongs to the complex I subunit 1 family. As to quaternary structure, NDH-1 is composed of 14 different subunits. Subunits NuoA, H, J, K, L, M, N constitute the membrane sector of the complex.

The protein resides in the cell inner membrane. It catalyses the reaction a quinone + NADH + 5 H(+)(in) = a quinol + NAD(+) + 4 H(+)(out). In terms of biological role, NDH-1 shuttles electrons from NADH, via FMN and iron-sulfur (Fe-S) centers, to quinones in the respiratory chain. The immediate electron acceptor for the enzyme in this species is believed to be ubiquinone. Couples the redox reaction to proton translocation (for every two electrons transferred, four hydrogen ions are translocated across the cytoplasmic membrane), and thus conserves the redox energy in a proton gradient. This subunit may bind ubiquinone. The protein is NADH-quinone oxidoreductase subunit H of Francisella philomiragia subsp. philomiragia (strain ATCC 25017 / CCUG 19701 / FSC 153 / O#319-036).